We begin with the raw amino-acid sequence, 141 residues long: Large ribosomal subunit protein uL11 (141 aa).

Belongs to the universal ribosomal protein uL11 family. Part of the ribosomal stalk of the 50S ribosomal subunit. Interacts with L10 and the large rRNA to form the base of the stalk. L10 forms an elongated spine to which L12 dimers bind in a sequential fashion forming a multimeric L10(L12)X complex. In terms of processing, one or more lysine residues are methylated.

Functionally, forms part of the ribosomal stalk which helps the ribosome interact with GTP-bound translation factors. The polypeptide is Large ribosomal subunit protein uL11 (Thermosipho africanus (strain TCF52B)).